The primary structure comprises 1450 residues: DNA-directed RNA polymerase III subunit rpc1 (1450 aa).

Zn(2+)-binding residues include cysteine 67, cysteine 70, cysteine 77, histidine 80, cysteine 107, cysteine 110, and cysteine 154. Mg(2+) is bound by residues aspartate 491, aspartate 493, and aspartate 495. The segment at 832 to 844 (PTEFFFHTMGGRE) is bridging helix.

The protein belongs to the RNA polymerase beta' chain family. Component of the RNA polymerase III (Pol III) complex consisting of 17 subunits.

It localises to the nucleus. It carries out the reaction RNA(n) + a ribonucleoside 5'-triphosphate = RNA(n+1) + diphosphate. In terms of biological role, DNA-dependent RNA polymerase catalyzes the transcription of DNA into RNA using the four ribonucleoside triphosphates as substrates. Largest and catalytic core component of RNA polymerase III which synthesizes small RNAs, such as 5S rRNA and tRNAs. Forms the polymerase active center together with the second largest subunit. A single-stranded DNA template strand of the promoter is positioned within the central active site cleft of Pol III. A bridging helix emanates from RPC1 and crosses the cleft near the catalytic site and is thought to promote translocation of Pol III by acting as a ratchet that moves the RNA-DNA hybrid through the active site by switching from straight to bent conformations at each step of nucleotide addition. The polypeptide is DNA-directed RNA polymerase III subunit rpc1 (polr3a) (Dictyostelium discoideum (Social amoeba)).